Here is a 199-residue protein sequence, read N- to C-terminus: Putative pseudouridine methyltransferase (199 aa).

Residues Leu132 and Cys186 each coordinate S-adenosyl-L-methionine.

It belongs to the methyltransferase superfamily. TrmY family.

The protein resides in the cytoplasm. The protein is Putative pseudouridine methyltransferase of Vibrio parahaemolyticus serotype O3:K6 (strain RIMD 2210633).